Here is a 410-residue protein sequence, read N- to C-terminus: Histone-lysine N-methyltransferase SUV39H2 (410 aa).

The Chromo domain maps to Y47–K105. The 59-residue stretch at F189–G247 folds into the Pre-SET domain. Positions 191, 193, 196, 201, 202, 229, 233, 235, and 239 each coordinate Zn(2+). Residues Y250–Q373 enclose the SET domain. S-adenosyl-L-methionine-binding positions include R261–W263, Y304, and N330–H331. Zn(2+) is bound at residue C333. 3 positions are modified to phosphoserine: S381, S384, and S388. In terms of domain architecture, Post-SET spans V394 to N410. Zn(2+)-binding residues include C398, C400, and C405.

This sequence belongs to the class V-like SAM-binding methyltransferase superfamily. Histone-lysine methyltransferase family. Suvar3-9 subfamily. As to quaternary structure, interacts with SMAD5. The large PER complex involved in the histone methylation is composed of at least PER2, CBX3, TRIM28, SUV39H1 and/or SUV39H2; CBX3 mediates the formation of the complex. Post-translationally, ubiquitinated by the DCX(DCAF13) E3 ubiquitin ligase complex, leading to its degradation.

The protein localises to the nucleus. The protein resides in the chromosome. Its subcellular location is the centromere. It catalyses the reaction L-lysyl(9)-[histone H3] + 3 S-adenosyl-L-methionine = N(6),N(6),N(6)-trimethyl-L-lysyl(9)-[histone H3] + 3 S-adenosyl-L-homocysteine + 3 H(+). Functionally, histone methyltransferase that specifically trimethylates 'Lys-9' of histone H3 using monomethylated H3 'Lys-9' as substrate. H3 'Lys-9' trimethylation represents a specific tag for epigenetic transcriptional repression by recruiting HP1 (CBX1, CBX3 and/or CBX5) proteins to methylated histones. Mainly functions in heterochromatin regions, thereby playing a central role in the establishment of constitutive heterochromatin at pericentric and telomere regions. H3 'Lys-9' trimethylation is also required to direct DNA methylation at pericentric repeats. SUV39H1 is targeted to histone H3 via its interaction with RB1 and is involved in many processes, such as cell cycle regulation, transcriptional repression and regulation of telomere length. May participate in regulation of higher-order chromatin organization during spermatogenesis. Recruited by the large PER complex to the E-box elements of the circadian target genes such as PER2 itself or PER1, contributes to the conversion of local chromatin to a heterochromatin-like repressive state through H3 'Lys-9' trimethylation. The sequence is that of Histone-lysine N-methyltransferase SUV39H2 (SUV39H2) from Macaca fascicularis (Crab-eating macaque).